We begin with the raw amino-acid sequence, 33 residues long: Ice-structuring protein GS-5 (33 aa).

At Met1 the chain carries Blocked amino end (Met).

The protein belongs to the type-I AFP family.

Functionally, antifreeze proteins lower the blood freezing point. The protein is Ice-structuring protein GS-5 of Myoxocephalus aenaeus (Grubby sculpin).